A 252-amino-acid polypeptide reads, in one-letter code: uncharacterized protein (252 aa).

28 to 35 serves as a coordination point for ATP; sequence GCDGTGKS.

To E.coli YghS and YghT.

This is an uncharacterized protein from Escherichia coli O6:H1 (strain CFT073 / ATCC 700928 / UPEC).